Here is a 493-residue protein sequence, read N- to C-terminus: Protein nucleotidyltransferase YdiU (493 aa).

8 residues coordinate ATP: Gly96, Gly98, Arg99, Lys119, Asp131, Gly132, Arg182, and Arg189. Asp258 acts as the Proton acceptor in catalysis. 2 residues coordinate Mg(2+): Asn259 and Asp268. Asp268 provides a ligand contact to ATP. Residues 471 to 493 (EKYTEFKNPPAPKERVSQTFCGT) are disordered.

The protein belongs to the SELO family. Mg(2+) serves as cofactor. The cofactor is Mn(2+).

It catalyses the reaction L-seryl-[protein] + ATP = 3-O-(5'-adenylyl)-L-seryl-[protein] + diphosphate. The catalysed reaction is L-threonyl-[protein] + ATP = 3-O-(5'-adenylyl)-L-threonyl-[protein] + diphosphate. The enzyme catalyses L-tyrosyl-[protein] + ATP = O-(5'-adenylyl)-L-tyrosyl-[protein] + diphosphate. It carries out the reaction L-histidyl-[protein] + UTP = N(tele)-(5'-uridylyl)-L-histidyl-[protein] + diphosphate. It catalyses the reaction L-seryl-[protein] + UTP = O-(5'-uridylyl)-L-seryl-[protein] + diphosphate. The catalysed reaction is L-tyrosyl-[protein] + UTP = O-(5'-uridylyl)-L-tyrosyl-[protein] + diphosphate. Functionally, nucleotidyltransferase involved in the post-translational modification of proteins. It can catalyze the addition of adenosine monophosphate (AMP) or uridine monophosphate (UMP) to a protein, resulting in modifications known as AMPylation and UMPylation. This Nitrosococcus oceani (strain ATCC 19707 / BCRC 17464 / JCM 30415 / NCIMB 11848 / C-107) protein is Protein nucleotidyltransferase YdiU.